A 130-amino-acid chain; its full sequence is Protein ApaG (130 aa).

An ApaG domain is found at 3 to 127 (RALTRDIEVT…FSLDSPGLVR (125 aa)).

The protein is Protein ApaG of Sinorhizobium fredii (strain NBRC 101917 / NGR234).